A 337-amino-acid chain; its full sequence is Regulator of RpoS (337 aa).

Residues 9 to 123 (QILIVEDEQV…NRLREMVFAC (115 aa)) form the Response regulatory domain. 4-aspartylphosphate is present on aspartate 58.

This sequence belongs to the RssB family. Binds to RpoS. In terms of processing, phosphorylated. Phosphorylation stimulates the interaction with RpoS and, therefore, the proteolysis of RpoS.

In terms of biological role, regulates the turnover of the sigma S factor (RpoS) by promoting its proteolysis in exponentially growing cells. Acts by binding and delivering RpoS to the ClpXP protease. RssB is not co-degraded with RpoS, but is released from the complex and can initiate a new cycle of RpoS recognition and degradation. The sequence is that of Regulator of RpoS from Shigella flexneri.